Reading from the N-terminus, the 302-residue chain is UDP-N-acetylenolpyruvoylglucosamine reductase (302 aa).

The FAD-binding PCMH-type domain maps to 30–196 (IGGPADLFVE…IAATLEMKKG (167 aa)). The active site involves arginine 174. The active-site Proton donor is the serine 225. Residue glutamate 295 is part of the active site.

This sequence belongs to the MurB family. It depends on FAD as a cofactor.

It localises to the cytoplasm. The enzyme catalyses UDP-N-acetyl-alpha-D-muramate + NADP(+) = UDP-N-acetyl-3-O-(1-carboxyvinyl)-alpha-D-glucosamine + NADPH + H(+). Its pathway is cell wall biogenesis; peptidoglycan biosynthesis. Its function is as follows. Cell wall formation. This chain is UDP-N-acetylenolpyruvoylglucosamine reductase, found in Anoxybacillus flavithermus (strain DSM 21510 / WK1).